The sequence spans 120 residues: NAD(P)H-quinone oxidoreductase subunit 3, chloroplastic (120 aa).

3 helical membrane-spanning segments follow: residues 14–34, 64–84, and 88–108; these read LIISSLIPILAFFISGILAPI, MFALVFVVFDVETVFLYPWAM, and ILGVSVFIEALIFVLILIVGL.

This sequence belongs to the complex I subunit 3 family. NDH is composed of at least 16 different subunits, 5 of which are encoded in the nucleus.

The protein localises to the plastid. Its subcellular location is the chloroplast thylakoid membrane. It carries out the reaction a plastoquinone + NADH + (n+1) H(+)(in) = a plastoquinol + NAD(+) + n H(+)(out). The enzyme catalyses a plastoquinone + NADPH + (n+1) H(+)(in) = a plastoquinol + NADP(+) + n H(+)(out). In terms of biological role, NDH shuttles electrons from NAD(P)H:plastoquinone, via FMN and iron-sulfur (Fe-S) centers, to quinones in the photosynthetic chain and possibly in a chloroplast respiratory chain. The immediate electron acceptor for the enzyme in this species is believed to be plastoquinone. Couples the redox reaction to proton translocation, and thus conserves the redox energy in a proton gradient. This is NAD(P)H-quinone oxidoreductase subunit 3, chloroplastic from Coffea arabica (Arabian coffee).